Here is a 396-residue protein sequence, read N- to C-terminus: Elongation factor Tu (396 aa).

Positions 10–206 (KPHCNIGTIG…NVDEYIPQPE (197 aa)) constitute a tr-type G domain. Positions 19-26 (GHVDHGKT) are G1. Residue 19 to 26 (GHVDHGKT) coordinates GTP. Position 26 (Thr-26) interacts with Mg(2+). A G2 region spans residues 60 to 64 (GITIS). Positions 81 to 84 (DCPG) are G3. Residues 81 to 85 (DCPGH) and 136 to 139 (NKCD) each bind GTP. Residues 136–139 (NKCD) form a G4 region. A G5 region spans residues 174 to 176 (SAL).

The protein belongs to the TRAFAC class translation factor GTPase superfamily. Classic translation factor GTPase family. EF-Tu/EF-1A subfamily. As to quaternary structure, monomer.

It localises to the cytoplasm. The catalysed reaction is GTP + H2O = GDP + phosphate + H(+). GTP hydrolase that promotes the GTP-dependent binding of aminoacyl-tRNA to the A-site of ribosomes during protein biosynthesis. The chain is Elongation factor Tu from Bradyrhizobium diazoefficiens (strain JCM 10833 / BCRC 13528 / IAM 13628 / NBRC 14792 / USDA 110).